The sequence spans 201 residues: Recombination protein RecR (201 aa).

The segment at 57 to 72 (CADCRTFTEQEKCNIC) adopts a C4-type zinc-finger fold. A Toprim domain is found at 81 to 176 (GQICVVESPA…DASRIAHGVP (96 aa)).

This sequence belongs to the RecR family.

Functionally, may play a role in DNA repair. It seems to be involved in an RecBC-independent recombinational process of DNA repair. It may act with RecF and RecO. This Cronobacter sakazakii (strain ATCC BAA-894) (Enterobacter sakazakii) protein is Recombination protein RecR.